Here is an 87-residue protein sequence, read N- to C-terminus: Small ribosomal subunit protein bS20 (87 aa).

Belongs to the bacterial ribosomal protein bS20 family.

Functionally, binds directly to 16S ribosomal RNA. The chain is Small ribosomal subunit protein bS20 from Parvibaculum lavamentivorans (strain DS-1 / DSM 13023 / NCIMB 13966).